A 625-amino-acid polypeptide reads, in one-letter code: Probable potassium transport system protein Kup 2 (625 aa).

12 helical membrane-spanning segments follow: residues 15–35, 52–72, 98–118, 134–154, 164–184, 203–223, 246–266, 284–304, 336–356, 365–385, 394–414, and 417–437; these read LSFAALGVVFGDIGTSPLYAF, ILSLIFWSLIIIVSIKYLVIV, GGWLLFITLVGIGLIIGDGIL, LSPNLAKYVLPVTLIILFFLF, IGIYFAPVMLIWFITIGVLGF, IYFFMIHKYFALFILGGVFLV, WFAVALPALLLCYFGQGAFVL, FLPVMIILATIATIIASQAII, VYLPLINFILALGTCSLVVIF, AYGIAVNLDMLITTVLVGIIA, FKVMIFPLILVIELAFFAGNI, and LLTGGWIPILIAFLGFVVMYT.

This sequence belongs to the HAK/KUP transporter (TC 2.A.72) family.

It is found in the cell inner membrane. The catalysed reaction is K(+)(in) + H(+)(in) = K(+)(out) + H(+)(out). In terms of biological role, transport of potassium into the cell. Likely operates as a K(+):H(+) symporter. In Legionella pneumophila subsp. pneumophila (strain Philadelphia 1 / ATCC 33152 / DSM 7513), this protein is Probable potassium transport system protein Kup 2.